A 279-amino-acid chain; its full sequence is Pantothenate synthetase (279 aa).

ATP is bound at residue 31-38 (MGNLHGGH). His-38 serves as the catalytic Proton donor. Gln-62 serves as a coordination point for (R)-pantoate. Gln-62 is a beta-alanine binding site. 150–153 (GRKD) provides a ligand contact to ATP. A (R)-pantoate-binding site is contributed by Gln-156. ATP-binding positions include Val-179 and 187–190 (KSSR).

The protein belongs to the pantothenate synthetase family. As to quaternary structure, homodimer.

The protein resides in the cytoplasm. It carries out the reaction (R)-pantoate + beta-alanine + ATP = (R)-pantothenate + AMP + diphosphate + H(+). It participates in cofactor biosynthesis; (R)-pantothenate biosynthesis; (R)-pantothenate from (R)-pantoate and beta-alanine: step 1/1. In terms of biological role, catalyzes the condensation of pantoate with beta-alanine in an ATP-dependent reaction via a pantoyl-adenylate intermediate. In Stenotrophomonas maltophilia (strain R551-3), this protein is Pantothenate synthetase.